A 182-amino-acid polypeptide reads, in one-letter code: Cytidylate kinase (182 aa).

7-15 (GLPGSGTTS) is an ATP binding site.

This sequence belongs to the cytidylate kinase family. Type 2 subfamily.

The protein resides in the cytoplasm. The catalysed reaction is CMP + ATP = CDP + ADP. The enzyme catalyses dCMP + ATP = dCDP + ADP. This chain is Cytidylate kinase, found in Methanoregula boonei (strain DSM 21154 / JCM 14090 / 6A8).